The chain runs to 194 residues: Ras-like protein RAS1 (194 aa).

A GTP-binding site is contributed by 16 to 23; the sequence is GAGGVGKS. Positions 38 to 46 match the Effector region motif; that stretch reads YDPTIEDSY. Residues 63–67 and 122–125 contribute to the GTP site; these read DTAGQ and NKVD. Residue Cys191 is modified to Cysteine methyl ester. Residue Cys191 is the site of S-geranylgeranyl cysteine attachment. The propeptide at 192–194 is removed in mature form; the sequence is TLL.

Belongs to the small GTPase superfamily. Ras family.

The protein resides in the cell membrane. It carries out the reaction GTP + H2O = GDP + phosphate + H(+). Alternates between an inactive form bound to GDP and an active form bound to GTP. Activated by a guanine nucleotide-exchange factor (GEF) and inactivated by a GTPase-activating protein (GAP). In terms of biological role, ras proteins bind GDP/GTP and possess intrinsic GTPase activity. The sequence is that of Ras-like protein RAS1 (RAS1) from Hydra vulgaris (Hydra).